Here is a 120-residue protein sequence, read N- to C-terminus: U13-lycotoxin-Ls1a (120 aa).

Positions 1-16 (MKILFVLISILHAVYC) are cleaved as a signal peptide. Positions 17–54 (FSSEEDVDSAYLANELEPVEDINSEQYAALEPKEEHER) are excised as a propeptide. 4 disulfides stabilise this stretch: cysteine 56–cysteine 70, cysteine 63–cysteine 76, cysteine 69–cysteine 87, and cysteine 78–cysteine 85. An Agouti domain is found at 56–95 (CADMGQDCKDDCDCCLNIATCNCWFGRYFCSCTFGDYQTC).

It belongs to the neurotoxin 05 (agouti) family. In terms of processing, contains 6 disulfide bonds. Expressed by the venom gland.

Its subcellular location is the secreted. This is U13-lycotoxin-Ls1a from Lycosa singoriensis (Wolf spider).